A 590-amino-acid polypeptide reads, in one-letter code: Keratin, type II cytoskeletal 5 (590 aa).

Residues methionine 1–serine 18 show a composition bias toward low complexity. The disordered stretch occupies residues methionine 1–alanine 20. The segment at methionine 1–glutamate 167 is head. Serine 5, serine 8, serine 16, and serine 21 each carry phosphoserine. A Phosphothreonine; by CDK1 modification is found at threonine 24. Serine 26, serine 36, serine 50, serine 64, serine 71, serine 75, and serine 82 each carry phosphoserine. Threonine 151 carries the phosphothreonine; by CDK1 modification. The interval glutamate 168 to leucine 203 is coil 1A. Positions glutamate 168–leucine 481 constitute an IF rod domain. Residues glutamine 204 to tyrosine 222 form a linker 1 region. Residues isoleucine 223–glutamine 315 form a coil 1B region. The segment at threonine 316–isoleucine 338 is linker 12. Residues isoleucine 339–glutamate 477 form a coil 2 region. A tail region spans residues glutamate 478–serine 590. Residues glycine 566–serine 590 are disordered. Over residues serine 572–serine 590 the composition is skewed to low complexity.

Belongs to the intermediate filament family. In terms of assembly, heterodimer of a type I and a type II keratin. Heterodimer with type I keratin KRT25 leading to the formation of keratin intermediate filament (KIF) network. Forms a heterodimer (via 2B domains) with KRT14 (via 2B domains). Interacts with PLEC isoform 1C, when in a heterodimer with KRT14. Interacts with TCHP. Interacts with EPPK1. Interacts with AMELX. Interacts with PKP1 (via N-terminus) and PKP2. In terms of processing, phosphorylated by CDK1, AURKB and Rho-kinase, phosphorylation is regulated by the cell cycle. Thr-24 phosphorylation, mediated by CDK1, peaks during prometaphase or metaphase cells with phosphorylated filamentous structures evident throughout the cytoplasm during early mitosis. CDK1 phosphorylates Thr-24 in mitotic cells at the site of injury. O-glycosylated. As to expression, expressed in corneal epithelium (at protein level). Expressed in keratinocytes (at protein level).

The protein localises to the cytoplasm. In terms of biological role, required for the formation of keratin intermediate filaments in the basal epidermis and maintenance of the skin barrier in response to mechanical stress. Regulates the recruitment of Langerhans cells to the epidermis, potentially by modulation of the abundance of macrophage chemotactic cytokines, macrophage inflammatory cytokines and CTNND1 localization in keratinocytes. The polypeptide is Keratin, type II cytoskeletal 5 (KRT5) (Homo sapiens (Human)).